The sequence spans 73 residues: UPF0154 protein LJ_1506 (73 aa).

Residues 3 to 23 traverse the membrane as a helical segment; sequence LGLAIFLIIIALLIGLVGGFY.

Belongs to the UPF0154 family.

The protein resides in the cell membrane. This is UPF0154 protein LJ_1506 from Lactobacillus johnsonii (strain CNCM I-12250 / La1 / NCC 533).